The following is a 497-amino-acid chain: Cytochrome P450 monooxygenase opdB (497 aa).

The helical transmembrane segment at 26 to 46 (YLGAMAGSVILLISAFTLSLG) threads the bilayer. The segment at 69–90 (MSKFTRSRELSQQGEDAAGTEP) is disordered. Cysteine 454 lines the heme pocket.

Heme serves as cofactor.

The protein resides in the membrane. Its pathway is secondary metabolite biosynthesis. Functionally, cytochrome P450 monooxygenase; part of the gene cluster that mediates the biosynthesis of oxopyrrolidines, polyketide-amino acid hybrid compounds with feature structures of tetramic acid. Does not seem to play a role in oxopyrrolidines A and B biosynthesis. May be involved in further modifications of these oxopyrrolidines. This Penicillium oxalicum (strain 114-2 / CGMCC 5302) (Penicillium decumbens) protein is Cytochrome P450 monooxygenase opdB.